Consider the following 642-residue polypeptide: MNSVSFEDVAVNFTLEEWALLDSSQKKLYEDVMQETFKNLVCLGKKWEDQDIEDDHRNQGRNRRGHMVERLCESRKGSKCGETTSQMPNVNINKETSTGAKPHECSFCGKDFMHHSSLNRHMRSHIGQKPNEYQEYEKQPCKRKAVGKTFSYRHCVRKHERTHTGGKPYECKQCGKAFIYYQPFQRHERIHAGEKPYECKQCGKTFIYYQSFQKHAHTGKKPYECKQCGKTFICYQSFQRHERTHTGEKPYECKQCGKAFSCPTYFRTHERTHTGEKPYKCKECGKAFSFLSSFRRHKRTHSGEKPYECKECGKAFFYSASFQAHVITHTGARPYKCKECGKAFNSSNSCRVHERTHIGEKPYECKRCGKSFSWSISLRMHERTHTGEKPYECKQCHKTFSFSSSLREHETTHTGEKPYECKQCGKAFRFSSSLQRHERTHSAEKPYECKQCGKAFRCSSYFRIHERSHTGEKPYECKQCGKVFIRSSSFRLHERTHTGEKPYECKLCGKAFSFSSSLREHEKIHTGNKPFECKRCGKAFLRSSQIRLHERTHTGEKPYQCKQCGKAFISSSKFRMHERTHTGEKPYRCKQCGKAFRFSSSVRIHERSHTGEKPYECKQCGKAFISSSHFRLHERTHMGEKA.

The 73-residue stretch at 4-76 (VSFEDVAVNF…MVERLCESRK (73 aa)) folds into the KRAB domain. The tract at residues 77 to 99 (GSKCGETTSQMPNVNINKETSTG) is disordered. A compositionally biased stretch (polar residues) spans 81 to 99 (GETTSQMPNVNINKETSTG). The C2H2-type 1 zinc-finger motif lies at 103–125 (HECSFCGKDFMHHSSLNRHMRSH). Residues 141 to 163 (CKRKAVGKTFSYRHCVRKHERTH) form a C2H2-type 2; degenerate zinc finger. Residues 169–191 (YECKQCGKAFIYYQPFQRHERIH) form a C2H2-type 3 zinc finger. The C2H2-type 4; atypical zinc-finger motif lies at 197–217 (YECKQCGKTFIYYQSFQKHAH). C2H2-type zinc fingers lie at residues 223–245 (YECK…ERTH), 251–273 (YECK…ERTH), 279–301 (YKCK…KRTH), 307–329 (YECK…VITH), 335–357 (YKCK…ERTH), 363–385 (YECK…ERTH), 391–413 (YECK…ETTH), 419–441 (YECK…ERTH), 447–469 (YECK…ERSH), 475–497 (YECK…ERTH), 503–525 (YECK…EKIH), 531–553 (FECK…ERTH), 559–581 (YQCK…ERTH), 587–609 (YRCK…ERSH), and 615–637 (YECK…ERTH).

This sequence belongs to the krueppel C2H2-type zinc-finger protein family.

Its subcellular location is the nucleus. Its function is as follows. May be involved in transcriptional regulation. The chain is Zinc finger protein 14 (ZNF14) from Macaca fascicularis (Crab-eating macaque).